We begin with the raw amino-acid sequence, 375 residues long: Serpin B5 (375 aa).

N-linked (GlcNAc...) asparagine glycosylation is found at Asn99, Asn133, Asn188, and Asn361.

The protein belongs to the serpin family. Ov-serpin subfamily. Interacts with IRF6. In terms of tissue distribution, normal mammary epithelial cells.

Its subcellular location is the secreted. The protein localises to the extracellular space. Its function is as follows. Tumor suppressor. It blocks the growth, invasion, and metastatic properties of mammary tumors. As it does not undergo the S (stressed) to R (relaxed) conformational transition characteristic of active serpins, it exhibits no serine protease inhibitory activity. The protein is Serpin B5 (SERPINB5) of Homo sapiens (Human).